Consider the following 224-residue polypeptide: 7-cyano-7-deazaguanine synthase (224 aa).

Residue 9 to 19 coordinates ATP; it reads ISGGMDSTLCA. Residues Cys-190, Cys-198, Cys-201, and Cys-204 each contribute to the Zn(2+) site.

It belongs to the QueC family. Requires Zn(2+) as cofactor.

The enzyme catalyses 7-carboxy-7-deazaguanine + NH4(+) + ATP = 7-cyano-7-deazaguanine + ADP + phosphate + H2O + H(+). Its pathway is purine metabolism; 7-cyano-7-deazaguanine biosynthesis. In terms of biological role, catalyzes the ATP-dependent conversion of 7-carboxy-7-deazaguanine (CDG) to 7-cyano-7-deazaguanine (preQ(0)). The chain is 7-cyano-7-deazaguanine synthase from Campylobacter jejuni subsp. jejuni serotype O:6 (strain 81116 / NCTC 11828).